The sequence spans 623 residues: Transketolase (623 aa).

Residue Met1 is modified to N-acetylmethionine. An N6-acetyllysine mark is found at Lys6 and Lys11. His37 provides a ligand contact to substrate. Thiamine diphosphate-binding residues include Ser40 and His77. The residue at position 104 (Ser104) is a Phosphoserine. 123 to 125 (GSL) contributes to the thiamine diphosphate binding site. Lys144 is modified (N6-acetyllysine). Mg(2+) is bound at residue Asp155. Residues Gly156 and Asn185 each contribute to the thiamine diphosphate site. Mg(2+)-binding residues include Asn185 and Leu187. N6-acetyllysine occurs at positions 204, 232, and 241. 2 residues coordinate thiamine diphosphate: Lys244 and His258. Position 258 (His258) interacts with substrate. Lys260 bears the N6-acetyllysine mark. Position 275 is a phosphotyrosine (Tyr275). Thr287 is modified (phosphothreonine). Residue Ser295 is modified to Phosphoserine. 2 residues coordinate substrate: Arg318 and Ser345. A Phosphoserine modification is found at Ser345. A Glycyl lysine isopeptide (Lys-Gly) (interchain with G-Cter in SUMO2) cross-link involves residue Lys352. Glu366 serves as the catalytic Proton donor. Thiamine diphosphate is bound at residue Phe392. Positions 416 and 424 each coordinate substrate. Thiamine diphosphate is bound at residue Gln428. Arg474 contacts substrate. Residues Lys538 and Lys603 each carry the N6-acetyllysine modification.

It belongs to the transketolase family. In terms of assembly, homodimer. The cofactor is Mg(2+). Ca(2+) is required as a cofactor. Mn(2+) serves as cofactor. It depends on Co(2+) as a cofactor. Requires thiamine diphosphate as cofactor.

The enzyme catalyses D-sedoheptulose 7-phosphate + D-glyceraldehyde 3-phosphate = aldehydo-D-ribose 5-phosphate + D-xylulose 5-phosphate. Its function is as follows. Catalyzes the transfer of a two-carbon ketol group from a ketose donor to an aldose acceptor, via a covalent intermediate with the cofactor thiamine pyrophosphate. The protein is Transketolase (Tkt) of Mus musculus (Mouse).